The primary structure comprises 154 residues: Protein X (154 aa).

The interval 68 to 117 (PCALRFTSARCMETTVNAHQILPKVLHKRTLGLPAMSTTDLEAYFKDCVF) is mitochondrial targeting sequence.

Belongs to the orthohepadnavirus protein X family. As to quaternary structure, may form homodimer. May interact with host CEBPA, CFLAR, CREB1, DDB1, E4F1, HBXIP, HSPD1/HSP60, NFKBIA, POLR2E and SMAD4. Interacts with host SMC5-SMC6 complex and induces its degradation. Interacts with host TRPC4AP; leading to prevent ubiquitination of TRPC4AP. Interacts with host PLSCR1; this interaction promotes ubiquitination and degradation of HBx and impairs HBx-mediated cell proliferation. A fraction may be phosphorylated in insect cells and HepG2 cells, a human hepatoblastoma cell line. Phosphorylated in vitro by host protein kinase C or mitogen-activated protein kinase. N-acetylated in insect cells.

The protein localises to the host cytoplasm. It localises to the host nucleus. It is found in the host mitochondrion. Its function is as follows. Multifunctional protein that plays a role in silencing host antiviral defenses and promoting viral transcription. Does not seem to be essential for HBV infection. May be directly involved in development of cirrhosis and liver cancer (hepatocellular carcinoma). Most of cytosolic activities involve modulation of cytosolic calcium. The effect on apoptosis is controversial depending on the cell types in which the studies have been conducted. May induce apoptosis by localizing in mitochondria and causing loss of mitochondrial membrane potential. May also modulate apoptosis by binding host CFLAR, a key regulator of the death-inducing signaling complex (DISC). Promotes viral transcription by using the host E3 ubiquitin ligase DDB1 to target the SMC5-SMC6 complex to proteasomal degradation. This host complex would otherwise bind to viral episomal DNA, and prevents its transcription. Moderately stimulates transcription of many different viral and cellular transcription elements. Promoters and enhancers stimulated by HBx contain DNA binding sites for NF-kappa-B, AP-1, AP-2, c-EBP, ATF/CREB, or the calcium-activated factor NF-AT. The protein is Protein X of Homo sapiens (Human).